The following is a 39-amino-acid chain: Natriuretic peptide NsNP-b (39 aa).

Positions 1-8 are excised as a propeptide; the sequence is SGSKTAKI. Residues cysteine 12 and cysteine 28 are joined by a disulfide bond. The tract at residues 19-39 is disordered; the sequence is RIGSTSGMGCGSVPKPTPGGS.

It belongs to the natriuretic peptide family. As to expression, expressed by the venom gland.

It is found in the secreted. In terms of biological role, snake venom natriuretic peptide that targets both NPR1 and NPR2. Exhibits hypotensive and vasodepressor activities. In Notechis scutatus scutatus (Mainland tiger snake), this protein is Natriuretic peptide NsNP-b.